Reading from the N-terminus, the 116-residue chain is Immunoglobulin heavy variable 3-13 (116 aa).

The N-terminal stretch at 1–19 (MELGLSWVFLVAILEGVQC) is a signal peptide. A framework-1 region spans residues 20 to 44 (EVQLVESGGGLVQPGGSLRLSCAAS). Positions 20-116 (EVQLVESGGG…GDTAVYYCAR (97 aa)) constitute an Ig-like domain. A disulfide bridge connects residues cysteine 41 and cysteine 114. Residues 45 to 52 (GFTFSSYD) are complementarity-determining-1. Residues 53-69 (MHWVRQATGKGLEWVSA) form a framework-2 region. A complementarity-determining-2 region spans residues 70 to 76 (IGTAGDP). A framework-3 region spans residues 77-114 (YYPGSVKGRFTISRENAKNSLYLQMNSLRAGDTAVYYC). Residues 115–116 (AR) form a complementarity-determining-3 region.

As to quaternary structure, immunoglobulins are composed of two identical heavy chains and two identical light chains; disulfide-linked.

The protein resides in the secreted. Its subcellular location is the cell membrane. Its function is as follows. V region of the variable domain of immunoglobulin heavy chains that participates in the antigen recognition. Immunoglobulins, also known as antibodies, are membrane-bound or secreted glycoproteins produced by B lymphocytes. In the recognition phase of humoral immunity, the membrane-bound immunoglobulins serve as receptors which, upon binding of a specific antigen, trigger the clonal expansion and differentiation of B lymphocytes into immunoglobulins-secreting plasma cells. Secreted immunoglobulins mediate the effector phase of humoral immunity, which results in the elimination of bound antigens. The antigen binding site is formed by the variable domain of one heavy chain, together with that of its associated light chain. Thus, each immunoglobulin has two antigen binding sites with remarkable affinity for a particular antigen. The variable domains are assembled by a process called V-(D)-J rearrangement and can then be subjected to somatic hypermutations which, after exposure to antigen and selection, allow affinity maturation for a particular antigen. The sequence is that of Immunoglobulin heavy variable 3-13 from Homo sapiens (Human).